The following is a 96-amino-acid chain: Prokineticin Bo8 (96 aa).

An N-terminal signal peptide occupies residues 1–19 (MKCFAQIVVLLLVIAFSHG). 5 disulfides stabilise this stretch: Cys26/Cys38, Cys32/Cys50, Cys37/Cys78, Cys60/Cys86, and Cys80/Cys95.

Expressed by the skin glands.

The protein resides in the secreted. Functionally, potent agonist for both PKR1/PROKR1 and PKR2/PROKR2, and inducer of a potent and long-lasting hyperalgesia. Also potentiates capsaicin-induced TRPV1 current, when tested on DRG neurons. At subnanomolar concentrations, this protein both induces potent chemotaxis of macrophages and stimulates LPS-induced production of the pro-inflammatory cytokines IL-1 and IL-12. In vivo, potently stimulates the contraction of the guinea-pig gastrointestinal (GI) smooth muscle (nanomolar concentration). The protein is Prokineticin Bo8 of Bombina orientalis (Oriental fire-bellied toad).